The chain runs to 168 residues: Ribosome maturation factor RimM (168 aa).

In terms of domain architecture, PRC barrel spans 93-167 (ENEFYQSDLV…YITLNMPEFI (75 aa)).

Belongs to the RimM family. As to quaternary structure, binds ribosomal protein uS19.

The protein localises to the cytoplasm. Functionally, an accessory protein needed during the final step in the assembly of 30S ribosomal subunit, possibly for assembly of the head region. Essential for efficient processing of 16S rRNA. May be needed both before and after RbfA during the maturation of 16S rRNA. It has affinity for free ribosomal 30S subunits but not for 70S ribosomes. This chain is Ribosome maturation factor RimM, found in Wolbachia sp. subsp. Brugia malayi (strain TRS).